A 66-amino-acid chain; its full sequence is Large ribosomal subunit protein bL35 (66 aa).

This sequence belongs to the bacterial ribosomal protein bL35 family.

This chain is Large ribosomal subunit protein bL35, found in Caulobacter vibrioides (strain ATCC 19089 / CIP 103742 / CB 15) (Caulobacter crescentus).